Reading from the N-terminus, the 187-residue chain is UPF0301 protein KPK_0728 (187 aa).

Belongs to the UPF0301 (AlgH) family.

The chain is UPF0301 protein KPK_0728 from Klebsiella pneumoniae (strain 342).